Reading from the N-terminus, the 268-residue chain is Protein MGF 300-1L (268 aa).

Topologically, residues 1–175 (MVSLTTYCLK…QTFKTFYAKN (175 aa)) are cytoplasmic. The chain crosses the membrane as a helical span at residues 176-193 (YSLSTLYCIFLAIYYKLY). Over 194–268 (MALRKMVKIY…MYAFSQNNFW (75 aa)) the chain is Extracellular.

Belongs to the asfivirus MGF 300 family.

It localises to the host membrane. In terms of biological role, plays a role in virus cell tropism, and may be required for efficient virus replication in macrophages. The sequence is that of Protein MGF 300-1L from African swine fever virus (isolate Tick/Malawi/Lil 20-1/1983) (ASFV).